Here is a 317-residue protein sequence, read N- to C-terminus: Putative 12-oxophytodienoate reductase 10 (317 aa).

26-28 lines the FMN pocket; it reads PVG. Residue 117 to 120 participates in substrate binding; the sequence is HGAN. The active-site Proton donor is the Tyr-122. Arg-169 lines the FMN pocket. Arg-209 is a substrate binding site. Residues Gly-244 and 265-266 each bind FMN; that span reads GR.

Belongs to the NADH:flavin oxidoreductase/NADH oxidase family. It depends on FMN as a cofactor.

In terms of biological role, putative oxophytodienoate reductase that may be involved in the biosynthesis or metabolism of oxylipin signaling molecules. The polypeptide is Putative 12-oxophytodienoate reductase 10 (OPR10) (Oryza sativa subsp. japonica (Rice)).